Here is a 119-residue protein sequence, read N- to C-terminus: MRQNQLIEKVTAGQLRSDIPAFRAGDTVRVHALIVEGTRERVQIFEGVVIKRHGAGISATYTVRKISNGIGVERTFPLHSPRVEKIEVVRYGRVRRAKLYYLRERTGKSARIAERRRDK.

It belongs to the bacterial ribosomal protein bL19 family.

In terms of biological role, this protein is located at the 30S-50S ribosomal subunit interface and may play a role in the structure and function of the aminoacyl-tRNA binding site. This chain is Large ribosomal subunit protein bL19, found in Limosilactobacillus fermentum (strain NBRC 3956 / LMG 18251) (Lactobacillus fermentum).